A 421-amino-acid polypeptide reads, in one-letter code: Transcription factor rglT (421 aa).

The segment at 1–29 (MQYEAYQWGQSHPTSTSGSMLQDTPTAAS) is disordered. Polar residues predominate over residues 8-29 (WGQSHPTSTSGSMLQDTPTAAS). The segment at residues 38–65 (CDECRKRKLKCSGEISGCSRCIKQSLSC) is a DNA-binding region (zn(2)-C6 fungal-type). The span at 346-357 (EARQRRWHESPD) shows a compositional bias: basic and acidic residues. The disordered stretch occupies residues 346–371 (EARQRRWHESPDSHPLPPDQRLNIPS).

It is found in the nucleus. In terms of biological role, transcription factor that is important for oxidative stress resistance and essential for gliotoxin (GT) self-protection through the regulation of a gene encoding a putative gliT homolog, even if E.nidulans does not produce gliotoxin itself. This chain is Transcription factor rglT, found in Emericella nidulans (strain FGSC A4 / ATCC 38163 / CBS 112.46 / NRRL 194 / M139) (Aspergillus nidulans).